The primary structure comprises 336 residues: Ketol-acid reductoisomerase (NADP(+)) (336 aa).

Residues 3 to 183 form the KARI N-terminal Rossmann domain; that stretch reads AKMYYDRDVD…GCTKAGVLET (181 aa). Residues 26–29, arginine 49, serine 52, serine 54, and 84–87 contribute to the NADP(+) site; these read YGSQ and DEQQ. Histidine 109 is an active-site residue. Glycine 135 contacts NADP(+). Positions 184-329 constitute a KARI C-terminal knotted domain; sequence TFKEETETDL…KELRDQMPFI (146 aa). Residues aspartate 192, glutamate 196, glutamate 228, and glutamate 232 each coordinate Mg(2+). Serine 253 contributes to the substrate binding site.

Belongs to the ketol-acid reductoisomerase family. Requires Mg(2+) as cofactor.

The enzyme catalyses (2R)-2,3-dihydroxy-3-methylbutanoate + NADP(+) = (2S)-2-acetolactate + NADPH + H(+). It catalyses the reaction (2R,3R)-2,3-dihydroxy-3-methylpentanoate + NADP(+) = (S)-2-ethyl-2-hydroxy-3-oxobutanoate + NADPH + H(+). It participates in amino-acid biosynthesis; L-isoleucine biosynthesis; L-isoleucine from 2-oxobutanoate: step 2/4. The protein operates within amino-acid biosynthesis; L-valine biosynthesis; L-valine from pyruvate: step 2/4. Involved in the biosynthesis of branched-chain amino acids (BCAA). Catalyzes an alkyl-migration followed by a ketol-acid reduction of (S)-2-acetolactate (S2AL) to yield (R)-2,3-dihydroxy-isovalerate. In the isomerase reaction, S2AL is rearranged via a Mg-dependent methyl migration to produce 3-hydroxy-3-methyl-2-ketobutyrate (HMKB). In the reductase reaction, this 2-ketoacid undergoes a metal-dependent reduction by NADPH to yield (R)-2,3-dihydroxy-isovalerate. This is Ketol-acid reductoisomerase (NADP(+)) from Deinococcus radiodurans (strain ATCC 13939 / DSM 20539 / JCM 16871 / CCUG 27074 / LMG 4051 / NBRC 15346 / NCIMB 9279 / VKM B-1422 / R1).